Consider the following 504-residue polypeptide: UDP-glycosyltransferase UGT4 (504 aa).

The N-terminal stretch at 1–23 (MTLLRDLLLLYINSLLFINPSIG) is a signal peptide. The Lumenal segment spans residues 24–474 (ENILVFLPTK…SAVIDLYWFQ (451 aa)). N-linked (GlcNAc...) asparagine glycosylation is found at asparagine 54, asparagine 66, asparagine 69, and asparagine 422. Residues 475-495 (YILLDIILFYSLIVLILLCIL) form a helical membrane-spanning segment. Topologically, residues 496 to 504 (RIFFRMLTK) are cytoplasmic.

It belongs to the UDP-glycosyltransferase family.

Its subcellular location is the microsome membrane. Catalyzes the transfer of a glycosyl group from a UDP-sugar to an acceptor molecule. In Dactylopius coccus (Cochineal), this protein is UDP-glycosyltransferase UGT4.